Here is a 137-residue protein sequence, read N- to C-terminus: Nucleoside diphosphate kinase (137 aa).

Positions 10, 59, 87, 93, 104, and 114 each coordinate ATP. The Pros-phosphohistidine intermediate role is filled by His117.

It belongs to the NDK family. Homotetramer. The cofactor is Mg(2+).

The protein localises to the cytoplasm. The enzyme catalyses a 2'-deoxyribonucleoside 5'-diphosphate + ATP = a 2'-deoxyribonucleoside 5'-triphosphate + ADP. It catalyses the reaction a ribonucleoside 5'-diphosphate + ATP = a ribonucleoside 5'-triphosphate + ADP. Its function is as follows. Major role in the synthesis of nucleoside triphosphates other than ATP. The ATP gamma phosphate is transferred to the NDP beta phosphate via a ping-pong mechanism, using a phosphorylated active-site intermediate. The protein is Nucleoside diphosphate kinase of Streptomyces avermitilis (strain ATCC 31267 / DSM 46492 / JCM 5070 / NBRC 14893 / NCIMB 12804 / NRRL 8165 / MA-4680).